We begin with the raw amino-acid sequence, 424 residues long: Dihydroorotase (424 aa).

Residues histidine 58 and histidine 60 each coordinate Zn(2+). Residues 60–62 (HLR) and asparagine 92 each bind substrate. Positions 150, 177, and 230 each coordinate Zn(2+). Asparagine 276 lines the substrate pocket. A Zn(2+)-binding site is contributed by aspartate 303. Residue aspartate 303 is part of the active site. Residues histidine 307 and 321 to 322 (FG) each bind substrate.

It belongs to the metallo-dependent hydrolases superfamily. DHOase family. Class I DHOase subfamily. The cofactor is Zn(2+).

The enzyme catalyses (S)-dihydroorotate + H2O = N-carbamoyl-L-aspartate + H(+). It participates in pyrimidine metabolism; UMP biosynthesis via de novo pathway; (S)-dihydroorotate from bicarbonate: step 3/3. Its function is as follows. Catalyzes the reversible cyclization of carbamoyl aspartate to dihydroorotate. This chain is Dihydroorotase, found in Staphylococcus aureus (strain MRSA252).